The chain runs to 475 residues: Beta-amyrin 6-beta-monooxygenase (475 aa).

The chain crosses the membrane as a helical span at residues 6-22; the sequence is LYSLAFALVYISLYFIF. Cys423 provides a ligand contact to heme.

The protein belongs to the cytochrome P450 family. Heme serves as cofactor. As to expression, specifically expressed in roots.

The protein resides in the membrane. It catalyses the reaction beta-amyrin + reduced [NADPH--hemoprotein reductase] + O2 = daturadiol + oxidized [NADPH--hemoprotein reductase] + H2O + H(+). Functionally, catalyzes the C-6 beta-hydroxylation of beta-amyrin to form daturadiol. Catalyzes the C-6 beta-hydroxylation of alpha-amyrin to form 6-beta-hydroxy-alpha-amyrin. The polypeptide is Beta-amyrin 6-beta-monooxygenase (Solanum lycopersicum (Tomato)).